Here is a 463-residue protein sequence, read N- to C-terminus: Probable Xaa-Pro aminopeptidase PEPP (463 aa).

Residues D259, D270, E393, and E433 each coordinate Mn(2+).

Belongs to the peptidase M24B family. Mn(2+) is required as a cofactor.

It catalyses the reaction Release of any N-terminal amino acid, including proline, that is linked to proline, even from a dipeptide or tripeptide.. Functionally, catalyzes the removal of a penultimate prolyl residue from the N-termini of peptides. The polypeptide is Probable Xaa-Pro aminopeptidase PEPP (PEPP) (Phaeosphaeria nodorum (strain SN15 / ATCC MYA-4574 / FGSC 10173) (Glume blotch fungus)).